We begin with the raw amino-acid sequence, 316 residues long: MTQALLCMSHSPLLDHATPPAEVKSAVDDAFARARDFVEAFDPELVVNFGPDHFNGFFYDLMPPFCIGYRAHGTGDYDSFAGDLDVPEDVAADLAQFVLDHGSDVAISRHMEVDHGAVQPMEILHGGDAGARPILPVFVNSIARPFVPMSRVRAFGHAVGDFFAGTDKRVLFLGSGGLSHDPPVPQFATATASQREFLTSGRNPPPEARPARQARTIETARRFAAGEAEIMDLNPEWDRAFLDVCRSGRVEDFDRYTADEMDAAAGHSSHEVRTWVAAYSALRACGEYDVTYEFYRPIKEYIAGFAVTTAQLAGEA.

His115 acts as the Proton donor in catalysis. His180 functions as the Proton acceptor in the catalytic mechanism.

It belongs to the LigB/MhpB extradiol dioxygenase family. In terms of assembly, homotetramer. The cofactor is Fe(2+).

It catalyses the reaction 3-(2,3-dihydroxyphenyl)propanoate + O2 = (2Z,4E)-2-hydroxy-6-oxonona-2,4-dienedioate + H(+). The enzyme catalyses (2E)-3-(2,3-dihydroxyphenyl)prop-2-enoate + O2 = (2Z,4E,7E)-2-hydroxy-6-oxonona-2,4,7-trienedioate + H(+). Its pathway is aromatic compound metabolism; 3-phenylpropanoate degradation. Its function is as follows. Catalyzes the non-heme iron(II)-dependent oxidative cleavage of 2,3-dihydroxyphenylpropionic acid and 2,3-dihydroxicinnamic acid into 2-hydroxy-6-ketononadienedioate and 2-hydroxy-6-ketononatrienedioate, respectively. The protein is 2,3-dihydroxyphenylpropionate/2,3-dihydroxicinnamic acid 1,2-dioxygenase of Rhodococcus rhodochrous.